Reading from the N-terminus, the 169-residue chain is Crossover junction endodeoxyribonuclease RuvC (169 aa).

Catalysis depends on residues Asp-12, Glu-72, and Asp-144. Positions 12, 72, and 144 each coordinate Mg(2+).

This sequence belongs to the RuvC family. Homodimer which binds Holliday junction (HJ) DNA. The HJ becomes 2-fold symmetrical on binding to RuvC with unstacked arms; it has a different conformation from HJ DNA in complex with RuvA. In the full resolvosome a probable DNA-RuvA(4)-RuvB(12)-RuvC(2) complex forms which resolves the HJ. The cofactor is Mg(2+).

It is found in the cytoplasm. The enzyme catalyses Endonucleolytic cleavage at a junction such as a reciprocal single-stranded crossover between two homologous DNA duplexes (Holliday junction).. Functionally, the RuvA-RuvB-RuvC complex processes Holliday junction (HJ) DNA during genetic recombination and DNA repair. Endonuclease that resolves HJ intermediates. Cleaves cruciform DNA by making single-stranded nicks across the HJ at symmetrical positions within the homologous arms, yielding a 5'-phosphate and a 3'-hydroxyl group; requires a central core of homology in the junction. The consensus cleavage sequence is 5'-(A/T)TT(C/G)-3'. Cleavage occurs on the 3'-side of the TT dinucleotide at the point of strand exchange. HJ branch migration catalyzed by RuvA-RuvB allows RuvC to scan DNA until it finds its consensus sequence, where it cleaves and resolves the cruciform DNA. The sequence is that of Crossover junction endodeoxyribonuclease RuvC from Xanthobacter autotrophicus (strain ATCC BAA-1158 / Py2).